The sequence spans 155 residues: MINTEGTKSLEAVDIEELLSILPHRYPFLLIDRIVEIDGEQQAIGIKNITINEPHFMGHFPAKPVMPGVLILEAMAQTAGAISLLRLGNKQTNLVYLMTVDNAKFRKPVIPGDQLKIHVRLLKKRSGMRRFSCVAEVEGVRVAEAEIAAMIIEAE.

Residue His-59 is part of the active site.

The protein belongs to the thioester dehydratase family. FabZ subfamily.

Its subcellular location is the cytoplasm. It carries out the reaction a (3R)-hydroxyacyl-[ACP] = a (2E)-enoyl-[ACP] + H2O. Its function is as follows. Involved in unsaturated fatty acids biosynthesis. Catalyzes the dehydration of short chain beta-hydroxyacyl-ACPs and long chain saturated and unsaturated beta-hydroxyacyl-ACPs. The sequence is that of 3-hydroxyacyl-[acyl-carrier-protein] dehydratase FabZ from Bartonella quintana (strain Toulouse) (Rochalimaea quintana).